Reading from the N-terminus, the 214-residue chain is Calcineurin B homologous protein 3 (214 aa).

Residue G2 is the site of N-myristoyl glycine attachment. One can recognise an EF-hand domain in the interval 110–145 (CRKDKLRFLFNMYDTDNDSKITLEEYRKVVEELLSG). Ca(2+) is bound by residues D123, D125, D127, K129, and E134.

The protein belongs to the calcineurin regulatory subunit family. CHP subfamily. As to quaternary structure, monomer. Homodimer.

The protein localises to the nucleus. The protein resides in the cytoplasm. It is found in the membrane. It localises to the cell membrane. Its subcellular location is the cell projection. The protein localises to the lamellipodium. The protein resides in the ruffle membrane. Its function is as follows. Functions as an integral cofactor in cell pH regulation by controlling plasma membrane-type Na(+)/H(+) exchange activity. Promotes the induction of hematopoietic stem cell differentiation toward megakaryocytic lineage. Essential for the coupling of ERK cascade activation with the expression of ETS family genes in megakaryocytic differentiation. Also involved in granulocytic differentiation in a ERK-dependent manner. Inhibits the phosphatase activity of calcineurin. This chain is Calcineurin B homologous protein 3 (tesc), found in Xenopus tropicalis (Western clawed frog).